Reading from the N-terminus, the 198-residue chain is Proteasome subunit beta type-4 (198 aa).

At M1 the chain carries N-acetylmethionine. Position 76 is a phosphoserine (S76).

It belongs to the peptidase T1B family. As to quaternary structure, the 26S proteasome consists of a 20S proteasome core and two 19S regulatory subunits. The 20S proteasome core is composed of 28 subunits that are arranged in four stacked rings, resulting in a barrel-shaped structure. The two end rings are each formed by seven alpha subunits, and the two central rings are each formed by seven beta subunits. The catalytic chamber with the active sites is on the inside of the barrel.

Its subcellular location is the cytoplasm. It localises to the nucleus. Functionally, non-catalytic component of the proteasome which degrades poly-ubiquitinated proteins in the cytoplasm and in the nucleus. It is essential for the regulated turnover of proteins and for the removal of misfolded proteins. The proteasome is a multicatalytic proteinase complex that is characterized by its ability to cleave peptides with Arg, Phe, Tyr, Leu, and Glu adjacent to the leaving group at neutral or slightly basic pH. It has an ATP-dependent proteolytic activity. This subunit has a chymotrypsin-like activity. The sequence is that of Proteasome subunit beta type-4 (PRE1) from Saccharomyces cerevisiae (strain ATCC 204508 / S288c) (Baker's yeast).